The chain runs to 180 residues: UPF0227 protein YcfP (180 aa).

Belongs to the UPF0227 family.

This Salmonella choleraesuis (strain SC-B67) protein is UPF0227 protein YcfP.